We begin with the raw amino-acid sequence, 285 residues long: Secreted LysM effector slp2 (285 aa).

The N-terminal stretch at 1–16 (MLPITVVTLFAALAAA) is a signal peptide. The disordered stretch occupies residues 75–143 (GDAAKAGDAA…KGGDAAKGGN (69 aa)). Residues 85 to 116 (KGGDAKGGDAKGGDAKGGDAKGGKGGDAKGGK) show a composition bias toward basic and acidic residues. The segment covering 117–139 (GGDAAKGGKGGDAAKGGKGGDAA) has biased composition (gly residues). LysM domains follow at residues 157–201 (VEHK…VLKI) and 237–281 (FTRV…TINL).

The protein belongs to the secreted LysM effector family.

In terms of biological role, might have a role in sequestration of chitin oligosaccharides (breakdown products of fungal cell walls that are released during invasion and act as triggers of host immunity) to dampen host defense. This is Secreted LysM effector slp2 from Pyricularia oryzae (strain 70-15 / ATCC MYA-4617 / FGSC 8958) (Rice blast fungus).